The chain runs to 840 residues: Protein translocase subunit SecA (840 aa).

ATP contacts are provided by residues glutamine 89, 107–111 (GEGKT), and aspartate 514.

Belongs to the SecA family. As to quaternary structure, monomer and homodimer. Part of the essential Sec protein translocation apparatus which comprises SecA, SecYEG and auxiliary proteins SecDF-YajC and YidC.

Its subcellular location is the cell inner membrane. It is found in the cytoplasm. The catalysed reaction is ATP + H2O + cellular proteinSide 1 = ADP + phosphate + cellular proteinSide 2.. Its function is as follows. Part of the Sec protein translocase complex. Interacts with the SecYEG preprotein conducting channel. Has a central role in coupling the hydrolysis of ATP to the transfer of proteins into and across the cell membrane, serving as an ATP-driven molecular motor driving the stepwise translocation of polypeptide chains across the membrane. In Blochmanniella floridana, this protein is Protein translocase subunit SecA.